A 2353-amino-acid chain; its full sequence is Otogelin-like protein (2353 aa).

The N-terminal stretch at 1–31 is a signal peptide; it reads MNIVRKLNLMIPWSIFLLHVLLFSLQEYICA. Positions 121-297 constitute a VWFD 1 domain; the sequence is GICKTWGQYH…VQTPDDTKCV (177 aa). 2 disulfides stabilise this stretch: Cys123–Cys257 and Cys145–Cys296. N-linked (GlcNAc...) asparagine glycosylation occurs at Asn144. The 54-residue stretch at 390–443 folds into the TIL 1 domain; sequence CDDSFVHRDCISCCPPTCTFEKQCLGSNLHCLDGCYCPDGLVMDNGTCISLENC. 2 N-linked (GlcNAc...) asparagine glycosylation sites follow: Asn434 and Asn473. Positions 481–654 constitute a VWFD 2 domain; sequence VQCSVVGDSH…NAWRVSSTCF (174 aa). Disulfide bonds link Cys483-Cys618, Cys505-Cys653, and Cys527-Cys535. The TIL 2 domain occupies 745-800; the sequence is CQKGMLYHHCSSFCLHSCISLSSPEQCSDDCAEGCNCPEGKFYEDTLNFCVPIFHC. 2 N-linked (GlcNAc...) asparagine glycosylation sites follow: Asn826 and Asn876. The VWFD 3 domain maps to 946–1115; it reads AVCTIYGDRH…SWALGQCESP (170 aa). 2 disulfide bridges follow: Cys948–Cys1078 and Cys992–Cys999. Residues Asn1289, Asn1604, and Asn2198 are each glycosylated (N-linked (GlcNAc...) asparagine). Residues 1534–1723 form the VWFD 4 domain; that stretch reads CRCSMLSELS…SWEIEKSFEV (190 aa). Cys1536 and Cys1683 are oxidised to a cystine. Disulfide bonds link Cys2261–Cys2317, Cys2282–Cys2331, Cys2293–Cys2348, and Cys2297–Cys2350. The region spanning 2261–2353 is the CTCK domain; it reads CKREERICQK…EPIDCTCQWN (93 aa).

Belongs to the otogelin family. Expressed at high levels in fetal inner ear and heart. Low levels in fetal skeletal muscle, kidney, spleen and colon. Not detected in fetal liver, lung, brain, nor in fetal stomach. In adult tissues, highest levels in brain, kidney, heart and retina. Relatively low levels in lung, spleen and duodenum. Not detected in adult skeletal muscle, liver, nor testis.

It is found in the secreted. The protein is Otogelin-like protein (OTOGL) of Homo sapiens (Human).